Consider the following 480-residue polypeptide: Trigger factor (480 aa).

Positions 169-264 (GDIAVVDFKG…LKELKEKELP (96 aa)) constitute a PPIase FKBP-type domain. Residues 441–480 (PEGSLSPAEETEAAESDADADVSQTEQENSEPSTTEVTEG) form a disordered region. Over residues 449-460 (EETEAAESDADA) the composition is skewed to acidic residues. The segment covering 462 to 480 (VSQTEQENSEPSTTEVTEG) has biased composition (polar residues).

It belongs to the FKBP-type PPIase family. Tig subfamily.

The protein localises to the cytoplasm. The enzyme catalyses [protein]-peptidylproline (omega=180) = [protein]-peptidylproline (omega=0). Its function is as follows. Involved in protein export. Acts as a chaperone by maintaining the newly synthesized protein in an open conformation. Functions as a peptidyl-prolyl cis-trans isomerase. The polypeptide is Trigger factor (Nostoc punctiforme (strain ATCC 29133 / PCC 73102)).